Consider the following 232-residue polypeptide: MEQGAEDIPVVYLHDIKRQYSQGEATLTILDGAKLALWAGQSVALVAPSGSGKSTLLHIAGLLEHPDEGEVYVSGAATSALTDAERTQIRRTDIGFVYQSHRLLPEFTALENVMLPQMIRGLKRKETISRSKEILSYLGLADRITHRPSELSGGEQQRVAIARAVANAPRVLFADEPTGNLDPHTADYVFNALMQLVKATQVAMLIATHNMELAARMDRRVSLQDGVVVELE.

An ABC transporter domain is found at 11–231; it reads VYLHDIKRQY…SLQDGVVVEL (221 aa). An ATP-binding site is contributed by 47-54; sequence APSGSGKS.

Belongs to the ABC transporter superfamily. Lipoprotein translocase (TC 3.A.1.125) family. In terms of assembly, the complex is composed of two ATP-binding proteins (LolD) and two transmembrane proteins (LolC and LolE).

The protein localises to the cell inner membrane. Part of the ABC transporter complex LolCDE involved in the translocation of mature outer membrane-directed lipoproteins, from the inner membrane to the periplasmic chaperone, LolA. Responsible for the formation of the LolA-lipoprotein complex in an ATP-dependent manner. This Rhodopseudomonas palustris (strain ATCC BAA-98 / CGA009) protein is Lipoprotein-releasing system ATP-binding protein LolD 2.